Here is a 622-residue protein sequence, read N- to C-terminus: 3-(3-hydroxy-phenyl)propionate/3-hydroxycinnamic acid hydroxylase (622 aa).

Residues 20-49 (DVAIIGAGPVGLMIANYLGLQGVRVVVLEK) and 288-298 (FRVDRVLLAGD) contribute to the FAD site.

This sequence belongs to the PheA/TfdB FAD monooxygenase family. FAD serves as cofactor.

It catalyses the reaction 3-(3-hydroxyphenyl)propanoate + NADH + O2 + H(+) = 3-(2,3-dihydroxyphenyl)propanoate + NAD(+) + H2O. The catalysed reaction is (2E)-3-(3-hydroxyphenyl)prop-2-enoate + NADH + O2 + H(+) = (2E)-3-(2,3-dihydroxyphenyl)prop-2-enoate + NAD(+) + H2O. The protein operates within aromatic compound metabolism; 3-phenylpropanoate degradation. Its function is as follows. Catalyzes the insertion of one atom of molecular oxygen into position 2 of the phenyl ring of 3-(3-hydroxyphenyl)propionate (3-HPP) and hydroxycinnamic acid (3HCI). The polypeptide is 3-(3-hydroxy-phenyl)propionate/3-hydroxycinnamic acid hydroxylase (Paraburkholderia xenovorans (strain LB400)).